We begin with the raw amino-acid sequence, 455 residues long: MQAATETIVAIATAQGRGGVGIVRISGPLAGQIAVAVSGRQLKARHAHYGPFLDAGGQVIDEGLSLYFPGPNSFTGEDVLELQGHGGPVVLDLLVQRCLELGARQARPGEFSERAFLNDKLDLAQAEAIADLIEASSEQAARNALRSLQGEFSRRVHALTEQLISLRIYVEAAIDFPEEEIDFLADGHVLGLLEKVRTELSTVQREASQGALLRDGMTVVIAGRPNAGKSSLLNALAGREAAIVTDIAGTTRDVLREHIHIDGMPLHVVDTAGLRDTEDHVEKIGVERALKAIGEADRVLLVVDATAPEAADPFSLWPEFLDQRPEPGKVTLIRNKADLSTESIGLEESADGHVTITLSARTGAGLELLREHLKACMGFEQTAESGFSARRRHLEALRQAGQALEHGHSQLIHNGAGELLAEDLRQAQQHLGEITGAFTPDDLLGRIFSSFCIGK.

The (6S)-5-formyl-5,6,7,8-tetrahydrofolate site is built by Arg-24, Glu-81, and Lys-120. In terms of domain architecture, TrmE-type G spans 216 to 378; it reads GMTVVIAGRP…LREHLKACMG (163 aa). Residue Asn-226 participates in K(+) binding. GTP-binding positions include 226–231, 245–251, 270–273, 335–338, and 359–361; these read NAGKSS, TDIAGTT, DTAG, NKAD, and SAR. Position 230 (Ser-230) interacts with Mg(2+). K(+) contacts are provided by Thr-245, Ile-247, and Thr-250. Thr-251 is a binding site for Mg(2+). Lys-455 contributes to the (6S)-5-formyl-5,6,7,8-tetrahydrofolate binding site.

The protein belongs to the TRAFAC class TrmE-Era-EngA-EngB-Septin-like GTPase superfamily. TrmE GTPase family. In terms of assembly, homodimer. Heterotetramer of two MnmE and two MnmG subunits. Requires K(+) as cofactor.

The protein localises to the cytoplasm. In terms of biological role, exhibits a very high intrinsic GTPase hydrolysis rate. Involved in the addition of a carboxymethylaminomethyl (cmnm) group at the wobble position (U34) of certain tRNAs, forming tRNA-cmnm(5)s(2)U34. This Pseudomonas aeruginosa (strain UCBPP-PA14) protein is tRNA modification GTPase MnmE.